The primary structure comprises 178 residues: Disulfide bond formation protein B (178 aa).

Over 1 to 14 the chain is Cytoplasmic; it reads MLSFFKTLSTKRSA. The chain crosses the membrane as a helical span at residues 15 to 31; it reads WFLLFSSALLLEAIALY. Residues 32 to 49 are Periplasmic-facing; sequence FQHGMGLAPCVMCIYERV. Cysteines 41 and 44 form a disulfide. A helical membrane pass occupies residues 50–65; sequence AILGIAFSGLLGLLYP. The Cytoplasmic portion of the chain corresponds to 66-72; it reads SSMLLRL. Residues 73–90 form a helical membrane-spanning segment; sequence VALLIGLSSAIKGLMISI. Residues 91–145 lie on the Periplasmic side of the membrane; the sequence is THLDLQLYPAPWKQCSAVAEFPETLPLDQWFPALFLPSGSCSEVTWQFLGFSMVQ. Cysteine 105 and cysteine 131 form a disulfide bridge. Residues 146–164 traverse the membrane as a helical segment; sequence WIVVIFALYTLLLALIFIS. The Cytoplasmic segment spans residues 165 to 177; that stretch reads QVKRLKPKQRRLF.

This sequence belongs to the DsbB family.

Its subcellular location is the cell inner membrane. Its function is as follows. Required for disulfide bond formation in some periplasmic proteins. Acts by oxidizing the DsbA protein. In Pasteurella multocida (strain Pm70), this protein is Disulfide bond formation protein B.